Here is a 589-residue protein sequence, read N- to C-terminus: Phenylalanine--tRNA ligase beta subunit (589 aa).

Residues 302–379 (LAYRKEMVRA…IAYGYSNIQM (78 aa)) form the B5 domain. 4 residues coordinate Mg(2+): Asp-357, Asp-363, Glu-366, and Asp-367.

It belongs to the phenylalanyl-tRNA synthetase beta subunit family. Type 2 subfamily. As to quaternary structure, heterotetramer; dimer of two heterodimers formed by FARSA and FARSB. Requires Mg(2+) as cofactor.

The protein resides in the cytoplasm. The catalysed reaction is tRNA(Phe) + L-phenylalanine + ATP = L-phenylalanyl-tRNA(Phe) + AMP + diphosphate + H(+). In Pongo abelii (Sumatran orangutan), this protein is Phenylalanine--tRNA ligase beta subunit (FARSB).